Here is a 689-residue protein sequence, read N- to C-terminus: Homoaconitase, mitochondrial (689 aa).

The transit peptide at 1-17 directs the protein to the mitochondrion; that stretch reads MVVLRRSFHVYTRLQRG. [4Fe-4S] cluster is bound by residues Cys336, Cys403, and Cys406.

Belongs to the aconitase/IPM isomerase family. Requires [4Fe-4S] cluster as cofactor.

The protein resides in the mitochondrion. The enzyme catalyses (2R,3S)-homoisocitrate = cis-homoaconitate + H2O. Its pathway is amino-acid biosynthesis; L-lysine biosynthesis via AAA pathway; L-alpha-aminoadipate from 2-oxoglutarate: step 3/5. Functionally, catalyzes the reversible hydration of cis-homoaconitate to (2R,3S)-homoisocitrate, a step in the alpha-aminoadipate pathway for lysine biosynthesis. The chain is Homoaconitase, mitochondrial (LYS4) from Candida glabrata (strain ATCC 2001 / BCRC 20586 / JCM 3761 / NBRC 0622 / NRRL Y-65 / CBS 138) (Yeast).